A 170-amino-acid polypeptide reads, in one-letter code: Ubiquitin-conjugating enzyme E2 G1 (170 aa).

Residue methionine 1 is modified to N-acetylmethionine. Threonine 2 is subject to N-acetylthreonine; in Ubiquitin-conjugating enzyme E2 G1, N-terminally processed. The 162-residue stretch at 5 to 166 folds into the UBC core domain; sequence QSALLLRRQL…VARCVRKSQE (162 aa). Cysteine 90 (glycyl thioester intermediate) is an active-site residue.

It belongs to the ubiquitin-conjugating enzyme family. Autoubiquitinated.

The catalysed reaction is S-ubiquitinyl-[E1 ubiquitin-activating enzyme]-L-cysteine + [E2 ubiquitin-conjugating enzyme]-L-cysteine = [E1 ubiquitin-activating enzyme]-L-cysteine + S-ubiquitinyl-[E2 ubiquitin-conjugating enzyme]-L-cysteine.. It functions in the pathway protein modification; protein ubiquitination. Functionally, accepts ubiquitin from the E1 complex and catalyzes its covalent attachment to other proteins. In vitro catalyzes 'Lys-48'-, as well as 'Lys-63'-linked polyubiquitination. May be involved in degradation of muscle-specific proteins. Mediates polyubiquitination of CYP3A4. The sequence is that of Ubiquitin-conjugating enzyme E2 G1 (UBE2G1) from Macaca fascicularis (Crab-eating macaque).